A 135-amino-acid chain; its full sequence is Ribosome-binding factor A (135 aa).

The protein belongs to the RbfA family. As to quaternary structure, monomer. Binds 30S ribosomal subunits, but not 50S ribosomal subunits or 70S ribosomes.

It localises to the cytoplasm. In terms of biological role, one of several proteins that assist in the late maturation steps of the functional core of the 30S ribosomal subunit. Associates with free 30S ribosomal subunits (but not with 30S subunits that are part of 70S ribosomes or polysomes). Required for efficient processing of 16S rRNA. May interact with the 5'-terminal helix region of 16S rRNA. This Hahella chejuensis (strain KCTC 2396) protein is Ribosome-binding factor A.